The chain runs to 54 residues: Ovomucoid (54 aa).

A Kazal-like domain is found at 4-54 (VDCSDYPKPVCPLDYMPLCGSDSKTYSNKCNFCNAVVESSGTLTLRHFGKC). 3 cysteine pairs are disulfide-bonded: cysteine 6–cysteine 36, cysteine 14–cysteine 33, and cysteine 22–cysteine 54.

Post-translationally, this is the only ovomucoid third domain known to be not glycosylated.

Its subcellular location is the secreted. This chain is Ovomucoid, found in Struthio camelus (Common ostrich).